Consider the following 379-residue polypeptide: Dual-specificity RNA methyltransferase RlmN (379 aa).

The active-site Proton acceptor is Glu95. Positions 101 to 345 (EETRGTLCVS…TTVRKTRGDD (245 aa)) constitute a Radical SAM core domain. The cysteines at positions 108 and 350 are disulfide-linked. Residues Cys115, Cys119, and Cys122 each contribute to the [4Fe-4S] cluster site. S-adenosyl-L-methionine is bound by residues 176–177 (GE), Ser208, 230–232 (SLH), and Asn307. The active-site S-methylcysteine intermediate is the Cys350.

This sequence belongs to the radical SAM superfamily. RlmN family. [4Fe-4S] cluster serves as cofactor.

Its subcellular location is the cytoplasm. It catalyses the reaction adenosine(2503) in 23S rRNA + 2 reduced [2Fe-2S]-[ferredoxin] + 2 S-adenosyl-L-methionine = 2-methyladenosine(2503) in 23S rRNA + 5'-deoxyadenosine + L-methionine + 2 oxidized [2Fe-2S]-[ferredoxin] + S-adenosyl-L-homocysteine. It carries out the reaction adenosine(37) in tRNA + 2 reduced [2Fe-2S]-[ferredoxin] + 2 S-adenosyl-L-methionine = 2-methyladenosine(37) in tRNA + 5'-deoxyadenosine + L-methionine + 2 oxidized [2Fe-2S]-[ferredoxin] + S-adenosyl-L-homocysteine. Its function is as follows. Specifically methylates position 2 of adenine 2503 in 23S rRNA and position 2 of adenine 37 in tRNAs. m2A2503 modification seems to play a crucial role in the proofreading step occurring at the peptidyl transferase center and thus would serve to optimize ribosomal fidelity. This Burkholderia lata (strain ATCC 17760 / DSM 23089 / LMG 22485 / NCIMB 9086 / R18194 / 383) protein is Dual-specificity RNA methyltransferase RlmN.